A 137-amino-acid polypeptide reads, in one-letter code: Large ribosomal subunit protein uL13 (137 aa).

Position 55 is a citrulline (arginine 55). At serine 73 the chain carries Phosphoserine. Arginine 136 is modified (citrulline).

This sequence belongs to the universal ribosomal protein uL13 family. Component of the 60S ribosome. Component of the GAIT complex. Interacts with EIF4G1. Post-translationally, phosphorylation at Ser-73 upon interferon-gamma treatment in macrophages involves a DAPK1-DAPK3 kinase cascade and is causing release from the ribosome, association with the GAIT complex and subsequent involvement in transcript-selective translation inhibition. Citrullinated by PADI4.

It localises to the cytoplasm. In terms of biological role, associated with ribosomes but is not required for canonical ribosome function and has extra-ribosomal functions. Component of the GAIT (gamma interferon-activated inhibitor of translation) complex which mediates interferon-gamma-induced transcript-selective translation inhibition in inflammation processes. Upon interferon-gamma activation and subsequent phosphorylation dissociates from the ribosome and assembles into the GAIT complex which binds to stem loop-containing GAIT elements in the 3'-UTR of diverse inflammatory mRNAs (such as ceruplasmin) and suppresses their translation. In the GAIT complex interacts with m7G cap-bound eIF4G at or near the eIF3-binding site and blocks the recruitment of the 43S ribosomal complex. Involved in methylation of rRNA. The chain is Large ribosomal subunit protein uL13 (RPL13A) from Sus scrofa (Pig).